The following is a 181-amino-acid chain: Neuroblastoma suppressor of tumorigenicity 1 (181 aa).

The N-terminal stretch at 1 to 16 (MMLRVLVGAVLPAMLL) is a signal peptide. 5 disulfides stabilise this stretch: Cys-35/Cys-85, Cys-49/Cys-99, Cys-59/Cys-118, Cys-63/Cys-120, and Cys-82/Cys-123. The 90-residue stretch at 35–124 (CEAKNITQIV…ILHCSCQACG (90 aa)) folds into the CTCK domain. The segment at 132–181 (LSVYVQGEDGPGSQPGTHPHPHPHPHPGGQTPEPEDPPGAPHTEEEGAED) is disordered.

The protein belongs to the DAN family. Homodimer. In terms of tissue distribution, most abundant in normal lung and meningioma.

The protein resides in the secreted. In terms of biological role, possible candidate as a tumor suppressor gene of neuroblastoma. May play an important role in preventing cells from entering the final stage (G1/S) of the transformation process. This Homo sapiens (Human) protein is Neuroblastoma suppressor of tumorigenicity 1 (NBL1).